The following is a 368-amino-acid chain: FAD-dependent monooxygenase phomE (368 aa).

Ala11 contributes to the FAD binding site. Active-site residues include Arg140 and Tyr178. FAD is bound by residues Asp249 and Gly262.

It belongs to the paxM FAD-dependent monooxygenase family. Monomer. Requires FAD as cofactor.

Its function is as follows. FAD-dependent monooxygenase; part of the gene cluster that mediates the biosynthesis of the phomopsins, a group of hexapeptide mycotoxins which infects lupins and causes lupinosis disease in livestock. The role of phomE within the phomopsins biosynthesis pathway has still to be determined. The pathway starts with the processing of the precursor phomA by several endopeptidases including kexin proteases as well as the cluster-specific S41 family peptidase phomP1 and the oligopeptidase phomG to produce 10 identical copies of the hexapeptide Tyr-Val-Ile-Pro-Ile-Asp. After being excised from the precursor peptide, the core peptides are cyclized and modified post-translationally by enzymes encoded within the gene cluster. The timing and order of proteolysis of the phomA precursor and PTMs are still unknown. Two tyrosinase-like enzymes, phomQ1 and phomQ2, catalyze the chlorination and hydroxylation of Tyr, respectively. PhomYb, is proposed to be involved in the construction of the macrocyclic structure. The other 4 ustYa family proteins may be involved in PTMs that generate the unique structure of phomopsin A. PhomYa is required for the hydroxylation of C-beta of Tyr. PhomYc, phomYd, and phomYe are responsible for the biosynthesis of 2,3-dehydroisoleucine (dIle), 2,3-dehydroaspartic acid (dAsp), and 3,4-dehydroproline (dPro), respectively. While dIle formation by phomYc is indispensable for the installation of dAsp by phomYd, the order of the other PTMs have not been elucidated yet. Most of the biosynthetic enzymes likely have broad substrate specificity, and thus, there might be a metabolic grid from a precursor to phomopsin A. The enzyme(s) responsible for the biosynthesis of 3,4-dehydrovaline (dVal) have also not been identified yet. Finally, phomM acts as an S-adenosylmethionine-dependent alpha-N-methyltransferase that catalyzes two successive N-methylation reactions, converting N-desmethyl-phomopsin A to phomopsin A and phomopsin A further to an N,N-dimethylated congener called phomopsin E. In Diaporthe leptostromiformis (Lupinosis disease fungus), this protein is FAD-dependent monooxygenase phomE.